A 407-amino-acid polypeptide reads, in one-letter code: Argininosuccinate synthase (407 aa).

ATP contacts are provided by residues 13 to 21 (AYSGGLDTS) and Ala-40. The L-citrulline site is built by Tyr-91 and Ser-96. Gly-121 contacts ATP. Residues Thr-123, Asn-127, and Asp-128 each contribute to the L-aspartate site. Residue Asn-127 participates in L-citrulline binding. Residues Arg-131, Ser-182, Ser-191, Glu-267, and Tyr-279 each contribute to the L-citrulline site.

Belongs to the argininosuccinate synthase family. Type 1 subfamily. In terms of assembly, homotetramer.

It localises to the cytoplasm. It carries out the reaction L-citrulline + L-aspartate + ATP = 2-(N(omega)-L-arginino)succinate + AMP + diphosphate + H(+). It functions in the pathway amino-acid biosynthesis; L-arginine biosynthesis; L-arginine from L-ornithine and carbamoyl phosphate: step 2/3. The chain is Argininosuccinate synthase from Mesorhizobium japonicum (strain LMG 29417 / CECT 9101 / MAFF 303099) (Mesorhizobium loti (strain MAFF 303099)).